Here is a 201-residue protein sequence, read N- to C-terminus: Transmembrane 4 L6 family member 18 (201 aa).

At 1 to 9 (MGSRKCGGC) the chain is on the cytoplasmic side. Residues 10 to 30 (LSCLLIPLALWSIIVNILLYF) form a helical membrane-spanning segment. Over 31–49 (PNGQTSYASSNKLTNYVWY) the chain is Extracellular. The helical transmembrane segment at 50–70 (FEGICFSGIMMLIVTTVLLVL) threads the bilayer. Residues 71-93 (ENNNNYKCCQSENCSKKYVTLLS) lie on the Cytoplasmic side of the membrane. The helical transmembrane segment at 94 to 114 (IIFSSLGIAFSGYCLVISALG) threads the bilayer. The Extracellular segment spans residues 115-157 (LVQGPYCRTLDGWEYAFEGTAGRFLTDSSIWIQCLEPAHVVEW). The helical transmembrane segment at 158–178 (NIILFSILITLSGLQVIICLI) threads the bilayer. The Cytoplasmic portion of the chain corresponds to 179-201 (RVVMQLSKILCGSYSVIFQPGII).

This sequence belongs to the L6 tetraspanin family.

It localises to the membrane. The sequence is that of Transmembrane 4 L6 family member 18 (TM4SF18) from Homo sapiens (Human).